A 208-amino-acid chain; its full sequence is Methyl-CpG-binding domain protein 3-like 5 (208 aa).

The protein belongs to the MBD3L family.

This chain is Methyl-CpG-binding domain protein 3-like 5 (MBD3L5), found in Homo sapiens (Human).